We begin with the raw amino-acid sequence, 494 residues long: PTS system cellobiose-specific EIIC component (494 aa).

Residues Met-8–Phe-481 enclose the PTS EIIC type-3 domain. 9 helical membrane-spanning segments follow: residues Phe-32 to Val-52, Ile-92 to Trp-112, Ala-119 to Leu-139, Ala-188 to Leu-208, Phe-227 to Ile-247, Ile-274 to Gly-294, Ala-355 to Phe-375, Val-406 to Ile-426, and Ala-463 to Ile-483.

Its subcellular location is the cell membrane. Its function is as follows. The phosphoenolpyruvate-dependent sugar phosphotransferase system (PTS), a major carbohydrate active transport system, catalyzes the phosphorylation of incoming sugar substrates concomitant with their translocation across the cell membrane. Involved in cellobiose transport with PtcA and PtcB. This system can also transport lactose. The chain is PTS system cellobiose-specific EIIC component from Lactococcus lactis subsp. lactis (strain IL1403) (Streptococcus lactis).